A 1483-amino-acid chain; its full sequence is Mediator of RNA polymerase II transcription subunit 26 (1483 aa).

Positions 8 to 85 constitute a TFIIS N-terminal domain; it reads ELTTHLSQAL…KKWREMVGIQ (78 aa). A phosphoserine mark is found at serine 204, serine 258, and serine 421. Disordered regions lie at residues 227-278, 414-438, 480-518, 541-575, and 989-1041; these read SDSD…GQVA, HEYLESDSPSQIPKRRGRKKGSKGV, VSMQSSASNLSNSSTNRDLPSHTTFPRQTSSCSDTSMNS, TDSDTVTSDPSHDSNKSQEIKECTSLDSNSNSIQS, and DKSS…MKRR. Positions 426–435 are enriched in basic residues; that stretch reads PKRRGRKKGS. The span at 480–495 shows a compositional bias: low complexity; the sequence is VSMQSSASNLSNSSTN. Over residues 496–518 the composition is skewed to polar residues; that stretch reads RDLPSHTTFPRQTSSCSDTSMNS. Position 541 is a phosphothreonine (threonine 541). Positions 550–564 are enriched in basic and acidic residues; that stretch reads PSHDSNKSQEIKECT. Serine 551 carries the post-translational modification Phosphoserine. 2 stretches are compositionally biased toward polar residues: residues 565 to 575 and 989 to 999; these read SLDSNSNSIQS and DKSSNTGCQGN. The span at 1000-1011 shows a compositional bias: low complexity; that stretch reads SPYSSSSSSSYS. The span at 1020-1033 shows a compositional bias: polar residues; sequence ITKNLQNKNIQLNS. Residue serine 1177 is modified to Phosphoserine. Residue threonine 1179 is modified to Phosphothreonine.

It belongs to the Mediator complex subunit 26 family. Component of the Mediator complex. Interacts with MED6 and MED17.

The protein resides in the nucleus. In terms of biological role, component of the Mediator complex, a coactivator involved in the regulated transcription of nearly all RNA polymerase II-dependent genes. Mediator functions as a bridge to convey information from gene-specific regulatory proteins to the basal RNA polymerase II transcription machinery. Mediator is recruited to promoters by direct interactions with regulatory proteins and serves as a scaffold for the assembly of a functional preinitiation complex with RNA polymerase II and the general transcription factors. Required for activated transcription of the MtnA gene. The polypeptide is Mediator of RNA polymerase II transcription subunit 26 (MED26) (Drosophila melanogaster (Fruit fly)).